The following is a 308-amino-acid chain: Ribosomal RNA large subunit methyltransferase F (308 aa).

It belongs to the methyltransferase superfamily. METTL16/RlmF family.

Its subcellular location is the cytoplasm. It carries out the reaction adenosine(1618) in 23S rRNA + S-adenosyl-L-methionine = N(6)-methyladenosine(1618) in 23S rRNA + S-adenosyl-L-homocysteine + H(+). Specifically methylates the adenine in position 1618 of 23S rRNA. The polypeptide is Ribosomal RNA large subunit methyltransferase F (Salmonella paratyphi A (strain ATCC 9150 / SARB42)).